Consider the following 416-residue polypeptide: Thyroid hormone receptor alpha (416 aa).

The segment at methionine 1 to asparagine 30 is disordered. Residues methionine 1–proline 58 are modulating. Residues glycine 15 to proline 24 show a composition bias toward basic and acidic residues. Residues cysteine 59, cysteine 62, cysteine 76, cysteine 79, cysteine 97, cysteine 103, cysteine 113, and cysteine 116 each contribute to the Zn(2+) site. 2 consecutive NR C4-type zinc fingers follow at residues cysteine 59 to cysteine 79 and cysteine 97 to cysteine 121. The nuclear receptor DNA-binding region spans cysteine 59–aspartate 133. Positions serine 169–aspartate 413 constitute an NR LBD domain. 2 residues coordinate 3,3',5-triiodo-L-thyronine: arginine 234 and serine 283.

This sequence belongs to the nuclear hormone receptor family. NR1 subfamily.

It localises to the nucleus. Its function is as follows. Nuclear hormone receptor that can act as a repressor or activator of transcription. High affinity receptor for thyroid hormones, including triiodothyronine and thyroxine. The protein is Thyroid hormone receptor alpha (thra1) of Salmo salar (Atlantic salmon).